Here is a 209-residue protein sequence, read N- to C-terminus: Octanoyltransferase (209 aa).

Residues 30-209 enclose the BPL/LPL catalytic domain; sequence VNEPEIVYLV…IQTEFNKIFT (180 aa). Substrate contacts are provided by residues 69–76, 143–145, and 156–158; these read RGGKFTFH, AIG, and GVA. Cysteine 174 acts as the Acyl-thioester intermediate in catalysis.

It belongs to the LipB family.

Its subcellular location is the cytoplasm. The catalysed reaction is octanoyl-[ACP] + L-lysyl-[protein] = N(6)-octanoyl-L-lysyl-[protein] + holo-[ACP] + H(+). It participates in protein modification; protein lipoylation via endogenous pathway; protein N(6)-(lipoyl)lysine from octanoyl-[acyl-carrier-protein]: step 1/2. Catalyzes the transfer of endogenously produced octanoic acid from octanoyl-acyl-carrier-protein onto the lipoyl domains of lipoate-dependent enzymes. Lipoyl-ACP can also act as a substrate although octanoyl-ACP is likely to be the physiological substrate. The sequence is that of Octanoyltransferase from Rickettsia canadensis (strain McKiel).